We begin with the raw amino-acid sequence, 326 residues long: tRNA-modifying protein YgfZ (326 aa).

Residues Trp27 and Trp189 each contribute to the folate site.

The protein belongs to the tRNA-modifying YgfZ family.

It is found in the cytoplasm. Functionally, folate-binding protein involved in regulating the level of ATP-DnaA and in the modification of some tRNAs. It is probably a key factor in regulatory networks that act via tRNA modification, such as initiation of chromosomal replication. The chain is tRNA-modifying protein YgfZ from Shigella dysenteriae serotype 1 (strain Sd197).